A 604-amino-acid chain; its full sequence is Elongation factor 4 (604 aa).

A tr-type G domain is found at Ser7–Ala189. Residues Asp19–Thr24 and Asn136–Asp139 contribute to the GTP site.

Belongs to the TRAFAC class translation factor GTPase superfamily. Classic translation factor GTPase family. LepA subfamily.

It localises to the cell inner membrane. It carries out the reaction GTP + H2O = GDP + phosphate + H(+). Functionally, required for accurate and efficient protein synthesis under certain stress conditions. May act as a fidelity factor of the translation reaction, by catalyzing a one-codon backward translocation of tRNAs on improperly translocated ribosomes. Back-translocation proceeds from a post-translocation (POST) complex to a pre-translocation (PRE) complex, thus giving elongation factor G a second chance to translocate the tRNAs correctly. Binds to ribosomes in a GTP-dependent manner. In Prochlorococcus marinus (strain MIT 9313), this protein is Elongation factor 4.